Reading from the N-terminus, the 358-residue chain is Methylthioribose-1-phosphate isomerase (358 aa).

Substrate contacts are provided by residues arginine 54–alanine 56, arginine 96, and glutamine 205. Catalysis depends on aspartate 246, which acts as the Proton donor. Asparagine 256–lysine 257 provides a ligand contact to substrate.

This sequence belongs to the eIF-2B alpha/beta/delta subunits family. MtnA subfamily.

The catalysed reaction is 5-(methylsulfanyl)-alpha-D-ribose 1-phosphate = 5-(methylsulfanyl)-D-ribulose 1-phosphate. The protein operates within amino-acid biosynthesis; L-methionine biosynthesis via salvage pathway; L-methionine from S-methyl-5-thio-alpha-D-ribose 1-phosphate: step 1/6. In terms of biological role, catalyzes the interconversion of methylthioribose-1-phosphate (MTR-1-P) into methylthioribulose-1-phosphate (MTRu-1-P). The protein is Methylthioribose-1-phosphate isomerase of Pseudomonas paraeruginosa (strain DSM 24068 / PA7) (Pseudomonas aeruginosa (strain PA7)).